The primary structure comprises 259 residues: 3-oxo-5-alpha-steroid 4-dehydrogenase 1 (259 aa).

5 helical membrane passes run 12–29, 86–106, 111–131, 151–171, and 209–229; these read LLAA…AVFA, ILLA…PFLM, PMPL…GYLQ, FLIG…SDHI, and YALA…FCFL.

This sequence belongs to the steroid 5-alpha reductase family. As to expression, liver and prostate (at a low level).

It localises to the microsome membrane. Its subcellular location is the endoplasmic reticulum membrane. The catalysed reaction is a 3-oxo-5alpha-steroid + NADP(+) = a 3-oxo-Delta(4)-steroid + NADPH + H(+). The enzyme catalyses androst-4-ene-3,17-dione + NADPH + H(+) = 5alpha-androstan-3,17-dione + NADP(+). It carries out the reaction 5alpha-pregnane-3,20-dione + NADP(+) = progesterone + NADPH + H(+). It catalyses the reaction 17beta-hydroxy-5alpha-androstan-3-one + NADP(+) = testosterone + NADPH + H(+). Its function is as follows. Converts testosterone into 5-alpha-dihydrotestosterone and progesterone or corticosterone into their corresponding 5-alpha-3-oxosteroids. It plays a central role in sexual differentiation and androgen physiology. This is 3-oxo-5-alpha-steroid 4-dehydrogenase 1 from Homo sapiens (Human).